We begin with the raw amino-acid sequence, 832 residues long: FAST kinase domain-containing protein 1, mitochondrial (832 aa).

An RAP domain is found at valine 765 to lysine 825.

The protein belongs to the FAST kinase family.

Its subcellular location is the mitochondrion. Functionally, may regulate the stability of some mitochondrial mRNA species. This is FAST kinase domain-containing protein 1, mitochondrial (fastkd1) from Xenopus tropicalis (Western clawed frog).